The sequence spans 820 residues: DNA gyrase subunit A (820 aa).

The Topo IIA-type catalytic domain occupies 31-496 (IPDVRDGLKP…TLTNIEIEDL (466 aa)). Y119 functions as the O-(5'-phospho-DNA)-tyrosine intermediate in the catalytic mechanism. The GyrA-box motif lies at 523-529 (QRRGGKG).

It belongs to the type II topoisomerase GyrA/ParC subunit family. Heterotetramer, composed of two GyrA and two GyrB chains. In the heterotetramer, GyrA contains the active site tyrosine that forms a transient covalent intermediate with DNA, while GyrB binds cofactors and catalyzes ATP hydrolysis.

The protein localises to the cytoplasm. The catalysed reaction is ATP-dependent breakage, passage and rejoining of double-stranded DNA.. Its function is as follows. A type II topoisomerase that negatively supercoils closed circular double-stranded (ds) DNA in an ATP-dependent manner to modulate DNA topology and maintain chromosomes in an underwound state. Negative supercoiling favors strand separation, and DNA replication, transcription, recombination and repair, all of which involve strand separation. Also able to catalyze the interconversion of other topological isomers of dsDNA rings, including catenanes and knotted rings. Type II topoisomerases break and join 2 DNA strands simultaneously in an ATP-dependent manner. This Lawsonia intracellularis (strain PHE/MN1-00) protein is DNA gyrase subunit A.